The chain runs to 175 residues: Peptide methionine sulfoxide reductase MsrA (175 aa).

Residue Cys10 is part of the active site.

This sequence belongs to the MsrA Met sulfoxide reductase family.

The enzyme catalyses L-methionyl-[protein] + [thioredoxin]-disulfide + H2O = L-methionyl-(S)-S-oxide-[protein] + [thioredoxin]-dithiol. The catalysed reaction is [thioredoxin]-disulfide + L-methionine + H2O = L-methionine (S)-S-oxide + [thioredoxin]-dithiol. Functionally, has an important function as a repair enzyme for proteins that have been inactivated by oxidation. Catalyzes the reversible oxidation-reduction of methionine sulfoxide in proteins to methionine. The polypeptide is Peptide methionine sulfoxide reductase MsrA (Clavibacter sepedonicus (Clavibacter michiganensis subsp. sepedonicus)).